The sequence spans 898 residues: Chloride channel protein 2 (898 aa).

Over 1-90 (MAAPAAAAVE…RCHKFLVSRV (90 aa)) the chain is Cytoplasmic. The essential for channel gating by both voltage and cell volume stretch occupies residues 19-37 (QYEQTLMYGRYTQDLGAFA). Threonine 23 is modified (phosphothreonine). A modulates channel gating by both voltage and cell volume region spans residues 39 to 52 (EEAARIRLGGPEPW). The next 2 helical transmembrane spans lie at 91–124 (GEDWIFLVLLGLLMALVSWAMDYAIAACLQAQQW) and 133–158 (LLLQYLAWVTYPVVLITFSAGFTQIL). Residues 164 to 168 (GSGIP) carry the Selectivity filter part_1 motif. An intramembrane region (helical) is located at residues 167-174 (IPEMKTIL). 2 helical membrane-spanning segments follow: residues 183–201 (LTLKTFVAKVIGLTCALGS) and 208–226 (EGPFVHIASMCAALLSKFL). A Selectivity filter part_2 motif is present at residues 206–210 (GKEGP). 2 consecutive intramembrane regions (helical) follow at residues 242-254 (MLAAACAVGVGCC) and 258-266 (PIGGVLFSI). The next 5 helical transmembrane spans lie at 278 to 298 (YWRGFFAATFSAFIFRVLAVW), 324 to 352 (LPAFAVIGIASGFGGALFVYLNRKIVQVM), 361 to 380 (FLMRKRLLFPALVTLLISTL), 432 to 452 (ANVFLTLVIFILMKFWMSALA), and 460 to 483 (GAFMPVFVIGAAFGRLVGESMAAW). Residues 460 to 464 (GAFMP) carry the Selectivity filter part_3 motif. Residues 500-514 (GGYAVVGAAALAGAV) constitute an intramembrane region (helical). Positions 515–516 (TH) form an intramembrane region, note=Loop between two helices. An intramembrane region (helical) is located at residues 517-528 (TVSTAVIVFELT). The note=Loop between two helices intramembrane region spans 529–533 (GQIAH). The chain crosses the membrane as a helical span at residues 534 to 551 (ILPVMIAVILANAVAQSL). Residues 552-898 (QPSLYDSIIR…SPSDSDDKCQ (347 aa)) are Cytoplasmic-facing. A CBS 1 domain is found at 587-645 (MVRDVPHVALSCTFRDLRLALHRTKGRTLALVESPESMILLGSIERTQVVALLAAQLSP). Over residues 647-658 (RRRQSKQKRRVA) the composition is skewed to basic residues. Residues 647–675 (RRRQSKQKRRVAHTSPPSCQESPPSPETS) are disordered. Serine 710 carries the post-translational modification Phosphoserine. The disordered stretch occupies residues 726-766 (FCGSPPPEAASESEKSESSEKRKSKRVRISLASDSDLEGEM). Positions 737–746 (ESEKSESSEK) are enriched in basic and acidic residues. Residue serine 758 is modified to Phosphoserine. In terms of domain architecture, CBS 2 spans 790–850 (IDPAPFQLVE…GSVTAQGVKV (61 aa)). A Basolateral membrane sorting motif is present at residues 812 to 813 (LL). Positions 856–898 (SFRDSATSSSDTETTEVHALWGPRSRHGLPREGSPSDSDDKCQ) are disordered.

This sequence belongs to the chloride channel (TC 2.A.49) family. ClC-2/CLCN2 subfamily. In terms of assembly, homodimer. Interacts with auxiliary subunit HEPACAM. Phosphorylated. Activated by dephosphorylation. Ubiquitously expressed.

Its subcellular location is the cell membrane. The protein resides in the basolateral cell membrane. It is found in the cell projection. The protein localises to the dendritic spine membrane. It localises to the axon. The catalysed reaction is chloride(in) = chloride(out). It carries out the reaction thiocyanate(in) = thiocyanate(out). The enzyme catalyses bromide(in) = bromide(out). It catalyses the reaction nitrate(in) = nitrate(out). The catalysed reaction is iodide(out) = iodide(in). Its activity is regulated as follows. Common gate kinetics are down-regulated by intracellular ATP. Inhibited by AK-42, a derivative of meclofenamate. Inhibited by Cd(2+). Inhibited by Zn(2+) and PKC activation. Inhibited at acidic pH. CCLN2:HEPACAM channel conductance is up-regulated upon hypo-osmolarity. Functionally, voltage-gated and osmosensitive chloride channel. Forms a homodimeric channel where each subunit has its own ion conduction pathway. Conducts double-barreled currents controlled by two types of gates, two fast glutamate gates that control each subunit independently and a slow common gate that opens and shuts off both subunits simultaneously. Displays inward rectification currents activated upon membrane hyperpolarization and extracellular hypotonicity. Contributes to chloride conductance involved in neuron excitability. In hippocampal neurons, generates a significant part of resting membrane conductance and provides an additional chloride efflux pathway to prevent chloride accumulation in dendrites upon GABA receptor activation. In glia, associates with the auxiliary subunit HEPACAM/GlialCAM at astrocytic processes and myelinated fiber tracts where it may regulate transcellular chloride flux buffering extracellular chloride and potassium concentrations. Regulates aldosterone production in adrenal glands. The opening of CLCN2 channels at hyperpolarized membrane potentials in the glomerulosa causes cell membrane depolarization, activation of voltage-gated calcium channels and increased expression of aldosterone synthase, the rate-limiting enzyme for aldosterone biosynthesis. Contributes to chloride conductance in retinal pigment epithelium involved in phagocytosis of shed photoreceptor outer segments and photoreceptor renewal. Conducts chloride currents at the basolateral membrane of epithelial cells with a role in chloride reabsorption rather than secretion. Permeable to small monovalent anions with chloride &gt; thiocyanate &gt; bromide &gt; nitrate &gt; iodide ion selectivity. This chain is Chloride channel protein 2 (CLCN2), found in Oryctolagus cuniculus (Rabbit).